Here is a 421-residue protein sequence, read N- to C-terminus: Gamma-glutamyl phosphate reductase (421 aa).

It belongs to the gamma-glutamyl phosphate reductase family.

Its subcellular location is the cytoplasm. The catalysed reaction is L-glutamate 5-semialdehyde + phosphate + NADP(+) = L-glutamyl 5-phosphate + NADPH + H(+). It functions in the pathway amino-acid biosynthesis; L-proline biosynthesis; L-glutamate 5-semialdehyde from L-glutamate: step 2/2. Functionally, catalyzes the NADPH-dependent reduction of L-glutamate 5-phosphate into L-glutamate 5-semialdehyde and phosphate. The product spontaneously undergoes cyclization to form 1-pyrroline-5-carboxylate. This is Gamma-glutamyl phosphate reductase from Azotobacter vinelandii (strain DJ / ATCC BAA-1303).